Consider the following 316-residue polypeptide: Beta-ketoacyl-[acyl-carrier-protein] synthase III 1 (316 aa).

Catalysis depends on residues cysteine 112 and histidine 243. The interval 244–248 (QANYR) is ACP-binding. The active site involves asparagine 273.

This sequence belongs to the thiolase-like superfamily. FabH family. In terms of assembly, homodimer.

The protein resides in the cytoplasm. The enzyme catalyses malonyl-[ACP] + acetyl-CoA + H(+) = 3-oxobutanoyl-[ACP] + CO2 + CoA. Its pathway is lipid metabolism; fatty acid biosynthesis. Catalyzes the condensation reaction of fatty acid synthesis by the addition to an acyl acceptor of two carbons from malonyl-ACP. Catalyzes the first condensation reaction which initiates fatty acid synthesis and may therefore play a role in governing the total rate of fatty acid production. Possesses both acetoacetyl-ACP synthase and acetyl transacylase activities. Its substrate specificity determines the biosynthesis of branched-chain and/or straight-chain of fatty acids. In Vibrio parahaemolyticus serotype O3:K6 (strain RIMD 2210633), this protein is Beta-ketoacyl-[acyl-carrier-protein] synthase III 1.